We begin with the raw amino-acid sequence, 295 residues long: MKQYLLGFTLVFALIACAQKGANPEQKGGDADVLNTSKTEKYLNKNLPSEAEDLVSLFNDSEIFVSKEKNKDGKYVLRAIVDTVELKGVADKNDGSEGKLEGLKPDNSKVTMSISKDQNTITIETRDSSNTKVASKVFKKDGSLTEESYKAGQLDSKKLTRSNKTTLEYSDMTNAENATTAIETLKNGIEFKGSLVGGKATLQIVESTVTLTREIDKDGKLKIYLKDTASSSKKTVSWNDTDTLTISAEGKKTKDLVFLTDGTITVQNYDSASGTTLEGTATEIKNLEALKTALK.

The N-terminal stretch at 1–16 is a signal peptide; that stretch reads MKQYLLGFTLVFALIA. Cys17 carries the N-palmitoyl cysteine lipid modification. Cys17 carries S-diacylglycerol cysteine lipidation.

It localises to the cell outer membrane. This is Outer surface protein B (ospB) from Borreliella burgdorferi (Lyme disease spirochete).